Here is a 130-residue protein sequence, read N- to C-terminus: Small ribosomal subunit protein uS9 (130 aa).

The segment at 105–130 (TRDSRMVERKKPGLKKARRASQFSKR) is disordered. A compositionally biased stretch (basic and acidic residues) spans 106–115 (RDSRMVERKK). Over residues 116–130 (PGLKKARRASQFSKR) the composition is skewed to basic residues.

The protein belongs to the universal ribosomal protein uS9 family.

The polypeptide is Small ribosomal subunit protein uS9 (Oenococcus oeni (strain ATCC BAA-331 / PSU-1)).